The chain runs to 459 residues: Zinc finger protein ZFP2 (459 aa).

13 C2H2-type zinc fingers span residues 100–122, 128–150, 156–178, 184–206, 212–234, 240–262, 268–290, 296–318, 324–346, 352–374, 380–402, 408–430, and 436–458; these read YGCDECGKTFRQSSSLLKHQRIH, YTCNVCDKHFIERSSLTVHQRTH, YKCHECGKAFSQSMNLTVHQRTH, YQCKECGKAFRKNSSLIQHERIH, YKCHDCGKAFTQSMNLTVHQRTH, YECNQCGKAFSQSMHLIVHQRSH, YECSECGKAFSKSSTLTLHQRNH, YKCNKCGKSFSQSTYLIEHQRLH, FECNQCGKAFSKNSSLTQHRRIH, YECMICGKHFTGRSSLTVHQVIH, YECTECGKAFSQSAYLIEHQRIH, YECDQCGKAFIKNSSLIVHQRIH, and YQCNECGKSFSRSTNLTRHQRTH.

This sequence belongs to the krueppel C2H2-type zinc-finger protein family.

Its subcellular location is the nucleus. Its function is as follows. Probable transcription factor involved in neuronal differentiation and/or phenotypic maintenance. The sequence is that of Zinc finger protein ZFP2 (Zfp2) from Mus musculus (Mouse).